Reading from the N-terminus, the 129-residue chain is Glycine cleavage system H protein (129 aa).

The 83-residue stretch at 24 to 106 (TYTVGITEHA…YAGGWIFKIK (83 aa)) folds into the Lipoyl-binding domain. Lys65 bears the N6-lipoyllysine mark.

The protein belongs to the GcvH family. As to quaternary structure, the glycine cleavage system is composed of four proteins: P, T, L and H. (R)-lipoate serves as cofactor.

In terms of biological role, the glycine cleavage system catalyzes the degradation of glycine. The H protein shuttles the methylamine group of glycine from the P protein to the T protein. This chain is Glycine cleavage system H protein, found in Shigella dysenteriae serotype 1 (strain Sd197).